A 299-amino-acid chain; its full sequence is Oxygen-dependent coproporphyrinogen-III oxidase (299 aa).

Serine 92 provides a ligand contact to substrate. Mn(2+) contacts are provided by histidine 96 and histidine 106. Histidine 106 serves as the catalytic Proton donor. Substrate is bound at residue 108–110; that stretch reads NVR. Residues histidine 145 and histidine 175 each contribute to the Mn(2+) site. Residues 240 to 275 are important for dimerization; it reads YVEFNLVWDRGTLFGLQTGGRTESILMSMPPLVRWE. Residue 258 to 260 coordinates substrate; that stretch reads GGR.

Belongs to the aerobic coproporphyrinogen-III oxidase family. In terms of assembly, homodimer. It depends on Mn(2+) as a cofactor.

It localises to the cytoplasm. The catalysed reaction is coproporphyrinogen III + O2 + 2 H(+) = protoporphyrinogen IX + 2 CO2 + 2 H2O. It participates in porphyrin-containing compound metabolism; protoporphyrin-IX biosynthesis; protoporphyrinogen-IX from coproporphyrinogen-III (O2 route): step 1/1. Its function is as follows. Involved in the heme biosynthesis. Catalyzes the aerobic oxidative decarboxylation of propionate groups of rings A and B of coproporphyrinogen-III to yield the vinyl groups in protoporphyrinogen-IX. In Escherichia coli (strain SE11), this protein is Oxygen-dependent coproporphyrinogen-III oxidase.